Reading from the N-terminus, the 327-residue chain is Metapyrocatechase (327 aa).

2 consecutive VOC domains span residues 14 to 126 and 156 to 276; these read QLAH…IFFE and RLDH…LFGD. Residues H159, H221, and E272 each coordinate Fe cation.

Belongs to the extradiol ring-cleavage dioxygenase family. Requires Fe(2+) as cofactor.

The catalysed reaction is catechol + O2 = (2Z,4E)-2-hydroxy-6-oxohexa-2,4-dienoate + H(+). In Geobacillus stearothermophilus (Bacillus stearothermophilus), this protein is Metapyrocatechase (pheB).